Reading from the N-terminus, the 399-residue chain is 1-deoxy-D-xylulose 5-phosphate reductoisomerase (399 aa).

NADPH is bound by residues Thr-16, Gly-17, Ser-18, Ile-19, Gly-42, Arg-43, Asn-44, and Asn-127. Lys-128 contacts 1-deoxy-D-xylulose 5-phosphate. Glu-129 contributes to the NADPH binding site. Residue Asp-153 participates in Mn(2+) binding. Positions 154, 155, 179, and 202 each coordinate 1-deoxy-D-xylulose 5-phosphate. Glu-155 is a Mn(2+) binding site. Gly-208 serves as a coordination point for NADPH. 1-deoxy-D-xylulose 5-phosphate is bound by residues Ser-215, Asn-220, Lys-221, and Glu-224. Glu-224 contacts Mn(2+).

The protein belongs to the DXR family. Mg(2+) is required as a cofactor. Requires Mn(2+) as cofactor.

It catalyses the reaction 2-C-methyl-D-erythritol 4-phosphate + NADP(+) = 1-deoxy-D-xylulose 5-phosphate + NADPH + H(+). The protein operates within isoprenoid biosynthesis; isopentenyl diphosphate biosynthesis via DXP pathway; isopentenyl diphosphate from 1-deoxy-D-xylulose 5-phosphate: step 1/6. Its function is as follows. Catalyzes the NADPH-dependent rearrangement and reduction of 1-deoxy-D-xylulose-5-phosphate (DXP) to 2-C-methyl-D-erythritol 4-phosphate (MEP). The polypeptide is 1-deoxy-D-xylulose 5-phosphate reductoisomerase (Caulobacter vibrioides (strain NA1000 / CB15N) (Caulobacter crescentus)).